A 194-amino-acid chain; its full sequence is Calcium channel flower (194 aa).

The next 3 helical transmembrane spans lie at 35–55 (LGIV…FSII), 66–88 (IIQM…VCFE), and 113–133 (AIPP…GLIF).

It belongs to the calcium channel flower family. Homomultimer. Associates with the dally/ magu complex.

The protein resides in the cytoplasmic vesicle. It is found in the secretory vesicle. Its subcellular location is the synaptic vesicle membrane. It localises to the presynaptic cell membrane. The protein localises to the endosome. With respect to regulation, channel activity is inhibited by La(3+), which reduces Ca(2+) influx and thus inhibits it's function in promoting activity-dependent bulk endocytosis (ADBE) in response to high stimuli. Its function is as follows. Transmembrane protein which mediates synaptic endocytosis, fitness-based cell culling, neuronal culling, morphogen gradient scaling, and calcium transport. Regulates synaptic endocytosis and hence couples exo- with endocytosis. Controls two major modes of synaptic vesicle (SV) endocytosis in the synaptic boutons of neuromuscular junctions (NMJs); Ca(2+) channel-independent Clathrin-mediated endocytosis (CME) in response to mild stimulation, and Ca(2+) channel-dependent activity-dependent bulk endocytosis (ADBE) in response to strong stimulation. Functions in ADBE and subsequent SV reformation from bulk endosomes by initiating Ca(2+) channel-dependent phosphatidylinositol 4,5-bisphosphate (PtdIns(4,5)P2) compartmentalization in synaptic boutons. There it acts at the periactive zone to provide the low Ca(2+) levels required to initiate Calcineurin activation and upregulate PtdIns(4,5)P2. Conversely PtdIns(4,5)P2 enhances fwe Ca(2+) channel-activity, establishing a positive feedback loop that induces PtdIns(4,5)P2 microdomain at the periactive zone. These microdomains trigger bulk membrane invagination (i.e. ADBE) by triggering actin polymerization while also promoting localization of fwe to bulk endosomes, thereby removing the ADBE trigger to reduce endocytosis and prevent excess membrane uptake. PtdIns(4,5)P2 then promotes SV reformation from the bulk endosomes, to coordinate ADBE and subsequent SV reformation. Different combinations of the flower isoforms at the cell membrane are also required for the identification and elimination of suboptimal or supernumerary cells during development, regeneration, and adulthood. Required for the recognition and elimination of unfit cells in the developing wing during cell competition. In the developing pupal retina, mediates the elimination of unwanted postmitotic neurons, including supernumerary photoreceptor neurons that form at the periphery of the retina and are contained within incomplete ommatidia units. Also required for efficient elimination and replacement of old neurons by newly generated neurons during regeneration in the adult brain following mechanical injury. Downstream of the flower fitness fingerprints, cells identified as unwanted or unfit are eliminated via apoptosis through the expression of ahuizotl (azot). However, the cells marked for elimination by the flower isoforms only undergo apoptosis if additional thresholds are met; (1) their neighboring fit/healthy cells express different levels of the fwe isoforms, and (2) the levels of the protective signal SPARC expressed by the loser or unwanted cells are unable to inhibit caspase activation. These additional thresholds for flower-mediated apoptosis, allows useful cells to recover from transient and limited stress before they are unnecessarily eliminated. Functions with dally and magu in a mechanism of scaling, which utilises apoptosis to ensure that the dpp morphogen gradient, which mediates organ growth, remains proportional to the size of the growing wing. In this mechanism, fwe represses dally- and Magu-dependent activity in expanding the gradient, and dally/Magu inhibits fwe-dependent apoptosis to keep cell death rate low. When the levels of these different proteins are optimally regulated the gradient correctly scales with organ growth but when this fails, fwe-mediated apoptosis is activated to trim the developing tissue to match the correct size of the gradient. This chain is Calcium channel flower, found in Drosophila yakuba (Fruit fly).